The primary structure comprises 205 residues: Small ribosomal subunit protein uS4 (205 aa).

Positions 17 to 46 (ENIWGRPKSPVNKREYGPGQHGQRRKGKLS) are disordered. Residues 94-157 (SRLDAVVYRA…KQLVIVLESV (64 aa)) enclose the S4 RNA-binding domain.

This sequence belongs to the universal ribosomal protein uS4 family. As to quaternary structure, part of the 30S ribosomal subunit. Contacts protein S5. The interaction surface between S4 and S5 is involved in control of translational fidelity.

In terms of biological role, one of the primary rRNA binding proteins, it binds directly to 16S rRNA where it nucleates assembly of the body of the 30S subunit. Functionally, with S5 and S12 plays an important role in translational accuracy. The protein is Small ribosomal subunit protein uS4 of Mesorhizobium japonicum (strain LMG 29417 / CECT 9101 / MAFF 303099) (Mesorhizobium loti (strain MAFF 303099)).